The sequence spans 141 residues: ATP synthase F(0) complex subunit C2, mitochondrial (141 aa).

The transit peptide at 1 to 66 (MFACSKFVST…RSFQTSAISR (66 aa)) directs the protein to the mitochondrion. A helical membrane pass occupies residues 82-102 (VGVAGSGAGIGTVFGSLIIGY). Lys-109 is subject to N6,N6,N6-trimethyllysine. A helical transmembrane segment spans residues 117 to 137 (ILGFALSEAMGLFCLMVAFLI).

This sequence belongs to the ATPase C chain family. In terms of assembly, F-type ATPases have 2 components, CF(1) - the catalytic core - and CF(0) - the membrane proton channel. CF(1) has five subunits: alpha(3), beta(3), gamma(1), delta(1), epsilon(1). CF(0) has three main subunits: a, b and c. Interacts with DNAJC30; interaction is direct. In terms of processing, trimethylated by ATPSCKMT at Lys-109. Methylation is required for proper incorporation of the C subunit into the ATP synthase complex and mitochondrial respiration.

Its subcellular location is the mitochondrion membrane. Its function is as follows. Mitochondrial membrane ATP synthase (F(1)F(0) ATP synthase or Complex V) produces ATP from ADP in the presence of a proton gradient across the membrane which is generated by electron transport complexes of the respiratory chain. F-type ATPases consist of two structural domains, F(1) - containing the extramembraneous catalytic core and F(0) - containing the membrane proton channel, linked together by a central stalk and a peripheral stalk. During catalysis, ATP synthesis in the catalytic domain of F(1) is coupled via a rotary mechanism of the central stalk subunits to proton translocation. Part of the complex F(0) domain. A homomeric c-ring of probably 10 subunits is part of the complex rotary element. This chain is ATP synthase F(0) complex subunit C2, mitochondrial, found in Homo sapiens (Human).